The primary structure comprises 111 residues: 2Fe-2S ferredoxin (111 aa).

Positions 1-104 (MPKVLFLPHK…DIEVEIPLYN (104 aa)) constitute a 2Fe-2S ferredoxin-type domain. Positions 42, 48, 51, and 87 each coordinate [2Fe-2S] cluster.

This sequence belongs to the adrenodoxin/putidaredoxin family. [2Fe-2S] cluster is required as a cofactor.

Its function is as follows. Ferredoxin are iron-sulfur proteins that transfer electrons in a wide variety of metabolic reactions. The polypeptide is 2Fe-2S ferredoxin (fdx) (Buchnera aphidicola subsp. Acyrthosiphon pisum (strain APS) (Acyrthosiphon pisum symbiotic bacterium)).